The sequence spans 380 residues: Set1 complex component swd3 (380 aa).

WD repeat units lie at residues 52 to 91 (GHEKSVTCVSVSPNKRWIATSSSDGTIKIWSALTFRLECT), 94 to 133 (GHYRGISQVKWATGSKYLASASDDKTIRIWDFEKRCSVRC), 136 to 177 (GHTN…RMLP), 179 to 219 (HSEP…KTLV), 221 to 262 (PINV…RIFD), 291 to 330 (NDSSYPDDAESFMHDAYLLIPSEDGTIQITDPSTKIIIDD), and 335 to 374 (SDDPETSLLNVTSLGPFIITSGTDPYVRVWAPSLLLSKHE). Residue S379 is modified to Phosphoserine.

In terms of assembly, component of the Set1 complex composed of ash2, sdc1, set1, shg1, spp1, swd1, swd2 and swd3.

The protein resides in the nucleus. The Set1 complex specifically methylates 'Lys-4' of histone H3. In Schizosaccharomyces pombe (strain 972 / ATCC 24843) (Fission yeast), this protein is Set1 complex component swd3.